We begin with the raw amino-acid sequence, 473 residues long: Photosystem II CP43 reaction center protein (473 aa).

A propeptide spanning residues 1–14 is cleaved from the precursor; that stretch reads MKTLYSLRRSYPVE. An N-acetylthreonine modification is found at T15. Position 15 is a phosphothreonine (T15). 5 consecutive transmembrane segments (helical) span residues 69–93, 134–155, 178–200, 255–275, and 291–312; these read LFEV…PHLA, LIGP…KDRN, KALY…RKIT, KPFA…LSYS, and WFNN…ASQA. E367 is a binding site for [CaMn4O5] cluster. A helical membrane pass occupies residues 447-471; that stretch reads RARAAAAGFEKGIDRDFEPVLSMTP.

Belongs to the PsbB/PsbC family. PsbC subfamily. PSII is composed of 1 copy each of membrane proteins PsbA, PsbB, PsbC, PsbD, PsbE, PsbF, PsbH, PsbI, PsbJ, PsbK, PsbL, PsbM, PsbT, PsbX, PsbY, PsbZ, Psb30/Ycf12, at least 3 peripheral proteins of the oxygen-evolving complex and a large number of cofactors. It forms dimeric complexes. Binds multiple chlorophylls and provides some of the ligands for the Ca-4Mn-5O cluster of the oxygen-evolving complex. It may also provide a ligand for a Cl- that is required for oxygen evolution. PSII binds additional chlorophylls, carotenoids and specific lipids. serves as cofactor.

It localises to the plastid. Its subcellular location is the chloroplast thylakoid membrane. In terms of biological role, one of the components of the core complex of photosystem II (PSII). It binds chlorophyll and helps catalyze the primary light-induced photochemical processes of PSII. PSII is a light-driven water:plastoquinone oxidoreductase, using light energy to abstract electrons from H(2)O, generating O(2) and a proton gradient subsequently used for ATP formation. This chain is Photosystem II CP43 reaction center protein, found in Pinus koraiensis (Korean pine).